A 337-amino-acid polypeptide reads, in one-letter code: Trace amine-associated receptor 5 (337 aa).

Topologically, residues 1-38 are extracellular; the sequence is MRAVLLPGSGEQPAAFCYQVNGSCPRTVHPLAIRVLIY. Asn21 is a glycosylation site (N-linked (GlcNAc...) asparagine). Disulfide bonds link Cys24/Cys188 and Cys99/Cys192. A helical transmembrane segment spans residues 39 to 59; it reads LACAVGMLITVLGNLFVVFAV. Topologically, residues 60–70 are cytoplasmic; the sequence is SYFKVLHTPTN. Residues 71–91 traverse the membrane as a helical segment; it reads FLLLSLALADMLLGLLVLPLS. The Extracellular segment spans residues 92 to 109; the sequence is TVRSVESCWFFGDFLCRL. A helical membrane pass occupies residues 110–130; the sequence is HTYLDTLFCLTSIFHLCFISI. Over 131–154 the chain is Cytoplasmic; the sequence is DRHCAICDPLLYPSKFTVRIALRY. Residues 155-175 traverse the membrane as a helical segment; the sequence is IAAGWGIPAAYTAFFLYTDVV. Residues 176–189 are extracellular Loop 2 (ECL2); sequence ERALSQWLEEMPCV. Residues 176–204 are Extracellular-facing; the sequence is ERALSQWLEEMPCVGSCQLLFNKFWGWLN. A helical transmembrane segment spans residues 205–225; it reads FPAFFIPCLIMISLYLKIFVV. At 226 to 253 the chain is on the cytoplasmic side; sequence ATRQAQQIRTLSQSLSGAVKRERKAAKT. The helical transmembrane segment at 254-274 threads the bilayer; it reads LGIAVGIYLVCWLPFTVDTLV. Over 275 to 284 the chain is Extracellular; that stretch reads DSLLNFVTPP. Residues 285–307 form a helical membrane-spanning segment; the sequence is LVFDIFIWFAYFNSACNPIIYVF. At 308-337 the chain is on the cytoplasmic side; that stretch reads SYRWFRKALKLLLSREILSPRTQTADLFHD.

This sequence belongs to the G-protein coupled receptor 1 family.

It is found in the cell membrane. Olfactory receptor specific for trimethylamine, a trace amine enriched in the urine of male rats, playing a role in social behavior. Also activated by N-methylpiperidine. Trimethylamine is present at high concentration in the urine of male after puberty and acts as an attractant. Trimethylamine-binding causes a conformation change that triggers signaling via G(s)-class of G alpha proteins (GNAL or GNAS). Also required to provide olfactory input into limbic brain areas to regulate emotional behaviors likely via modulation of the serotonin system. In Rattus norvegicus (Rat), this protein is Trace amine-associated receptor 5.